The sequence spans 114 residues: Large ribosomal subunit protein bL20 (114 aa).

Belongs to the bacterial ribosomal protein bL20 family.

Binds directly to 23S ribosomal RNA and is necessary for the in vitro assembly process of the 50S ribosomal subunit. It is not involved in the protein synthesizing functions of that subunit. This chain is Large ribosomal subunit protein bL20, found in Anaeromyxobacter sp. (strain Fw109-5).